Consider the following 353-residue polypeptide: Holliday junction branch migration complex subunit RuvB (353 aa).

The interval 4–185 (ADRLITATGG…FGIVQRLEFY (182 aa)) is large ATPase domain (RuvB-L). ATP contacts are provided by residues Ile-24, Arg-25, Gly-66, Lys-69, Thr-70, Thr-71, 132-134 (EDF), Arg-175, Tyr-185, and Arg-222. Thr-70 contacts Mg(2+). Residues 186–256 (NIADLSTIVS…TADKALNLLD (71 aa)) form a small ATPAse domain (RuvB-S) region. Residues 259–353 (EHGFDHQDRR…DDFGDEPVDL (95 aa)) form a head domain (RuvB-H) region. Positions 295, 314, and 319 each coordinate DNA.

This sequence belongs to the RuvB family. Homohexamer. Forms an RuvA(8)-RuvB(12)-Holliday junction (HJ) complex. HJ DNA is sandwiched between 2 RuvA tetramers; dsDNA enters through RuvA and exits via RuvB. An RuvB hexamer assembles on each DNA strand where it exits the tetramer. Each RuvB hexamer is contacted by two RuvA subunits (via domain III) on 2 adjacent RuvB subunits; this complex drives branch migration. In the full resolvosome a probable DNA-RuvA(4)-RuvB(12)-RuvC(2) complex forms which resolves the HJ.

It localises to the cytoplasm. It carries out the reaction ATP + H2O = ADP + phosphate + H(+). In terms of biological role, the RuvA-RuvB-RuvC complex processes Holliday junction (HJ) DNA during genetic recombination and DNA repair, while the RuvA-RuvB complex plays an important role in the rescue of blocked DNA replication forks via replication fork reversal (RFR). RuvA specifically binds to HJ cruciform DNA, conferring on it an open structure. The RuvB hexamer acts as an ATP-dependent pump, pulling dsDNA into and through the RuvAB complex. RuvB forms 2 homohexamers on either side of HJ DNA bound by 1 or 2 RuvA tetramers; 4 subunits per hexamer contact DNA at a time. Coordinated motions by a converter formed by DNA-disengaged RuvB subunits stimulates ATP hydrolysis and nucleotide exchange. Immobilization of the converter enables RuvB to convert the ATP-contained energy into a lever motion, pulling 2 nucleotides of DNA out of the RuvA tetramer per ATP hydrolyzed, thus driving DNA branch migration. The RuvB motors rotate together with the DNA substrate, which together with the progressing nucleotide cycle form the mechanistic basis for DNA recombination by continuous HJ branch migration. Branch migration allows RuvC to scan DNA until it finds its consensus sequence, where it cleaves and resolves cruciform DNA. This Pseudomonas syringae pv. syringae (strain B728a) protein is Holliday junction branch migration complex subunit RuvB.